Reading from the N-terminus, the 463-residue chain is Cytidylate cyclase (463 aa).

The Guanylate cyclase domain occupies 122-231 (VTMFMDIIGS…IGIRIGIDLG (110 aa)). Phe125 is a binding site for a ribonucleoside 5'-triphosphate. Mn(2+) is bound by residues Asp127, Ile128, and Asp171. Residues 334–454 (KPSRIKVVIS…VISNDTVIER (121 aa)) form an AGS-C domain region.

It belongs to the adenylyl cyclase class-4/guanylyl cyclase family. Pyrimidine cyclase subfamily. In terms of assembly, homodimer. Mn(2+) serves as cofactor.

Its subcellular location is the cytoplasm. The catalysed reaction is CTP = 3',5'-cyclic CMP + diphosphate. Its function is as follows. Pycsar (pyrimidine cyclase system for antiphage resistance) provides immunity against bacteriophage. The pyrimidine cyclase (PycC) synthesizes cyclic nucleotides in response to infection; these serve as specific second messenger signals. The signal activates the adjacent effector, leading to bacterial cell death and abortive phage infection. A clade E Pycsar system. The pyrimidine cyclase gene of a two-gene Pycsar system, generates cyclic CMP (cCMP) from CTP in response to bacteriophage infection. Has little to no activity on ATP, GTP or UTP. Expression of this and adjacent effector Ec303145PycTM (AC P0DV27) confers resistance to bacteriophage P1, T5, lambda-vir and phi27. This is Cytidylate cyclase from Escherichia coli.